Consider the following 66-residue polypeptide: UPF0337 protein M6_Spy1542 (66 aa).

Basic and acidic residues predominate over residues 1–10 (MSEEKLKAKV). Positions 1-22 (MSEEKLKAKVEQASGSLKEGAG) are disordered.

It belongs to the UPF0337 (CsbD) family.

In Streptococcus pyogenes serotype M6 (strain ATCC BAA-946 / MGAS10394), this protein is UPF0337 protein M6_Spy1542.